The following is a 705-amino-acid chain: Polyribonucleotide nucleotidyltransferase (705 aa).

Mg(2+)-binding residues include Asp486 and Asp492. A KH domain is found at 553 to 612 (PRIHTIRINPDKIKDVIGKGGSVIRALTEETGTTIEIEDDGTVKIAATDGEKAKFAIRRI). One can recognise an S1 motif domain in the interval 622-690 (GRIYQGKVTR…RQGRVRLSIK (69 aa)).

This sequence belongs to the polyribonucleotide nucleotidyltransferase family. Component of the RNA degradosome, which is a multiprotein complex involved in RNA processing and mRNA degradation. It depends on Mg(2+) as a cofactor.

Its subcellular location is the cytoplasm. It carries out the reaction RNA(n+1) + phosphate = RNA(n) + a ribonucleoside 5'-diphosphate. Functionally, involved in mRNA degradation. Catalyzes the phosphorolysis of single-stranded polyribonucleotides processively in the 3'- to 5'-direction. This Serratia proteamaculans (strain 568) protein is Polyribonucleotide nucleotidyltransferase.